Here is a 525-residue protein sequence, read N- to C-terminus: Light-independent protochlorophyllide reductase subunit B (525 aa).

Asp36 is a binding site for [4Fe-4S] cluster. The Proton donor role is filled by Asp274. 409–410 (GL) is a binding site for substrate. Residues 433–464 (HGGKAVAREESPVAPADLAPAATSDTPAAPSP) are disordered. Over residues 444–464 (PVAPADLAPAATSDTPAAPSP) the composition is skewed to low complexity.

It belongs to the ChlB/BchB/BchZ family. As to quaternary structure, protochlorophyllide reductase is composed of three subunits; BchL, BchN and BchB. Forms a heterotetramer of two BchB and two BchN subunits. [4Fe-4S] cluster is required as a cofactor.

The catalysed reaction is chlorophyllide a + oxidized 2[4Fe-4S]-[ferredoxin] + 2 ADP + 2 phosphate = protochlorophyllide a + reduced 2[4Fe-4S]-[ferredoxin] + 2 ATP + 2 H2O. It participates in porphyrin-containing compound metabolism; bacteriochlorophyll biosynthesis (light-independent). In terms of biological role, component of the dark-operative protochlorophyllide reductase (DPOR) that uses Mg-ATP and reduced ferredoxin to reduce ring D of protochlorophyllide (Pchlide) to form chlorophyllide a (Chlide). This reaction is light-independent. The NB-protein (BchN-BchB) is the catalytic component of the complex. This Rhodobacter capsulatus (strain ATCC BAA-309 / NBRC 16581 / SB1003) protein is Light-independent protochlorophyllide reductase subunit B.